A 110-amino-acid polypeptide reads, in one-letter code: Cytochrome c (110 aa).

Heme c-binding residues include Cys-21, Cys-24, His-25, and Met-87.

The protein belongs to the cytochrome c family. In terms of processing, binds 1 heme c group covalently per subunit.

The protein resides in the mitochondrion intermembrane space. Electron carrier protein. The oxidized form of the cytochrome c heme group can accept an electron from the heme group of the cytochrome c1 subunit of cytochrome reductase. Cytochrome c then transfers this electron to the cytochrome oxidase complex, the final protein carrier in the mitochondrial electron-transport chain. The sequence is that of Cytochrome c (CYCK) from Kluyveromyces lactis (strain ATCC 8585 / CBS 2359 / DSM 70799 / NBRC 1267 / NRRL Y-1140 / WM37) (Yeast).